A 426-amino-acid polypeptide reads, in one-letter code: Adenylosuccinate synthetase (426 aa).

Residues 14–20 (GDEGKGK) and 42–44 (GHT) each bind GTP. Asp15 serves as the catalytic Proton acceptor. Residues Asp15 and Gly42 each coordinate Mg(2+). Residues 15 to 18 (DEGK), 40 to 43 (NAGH), Thr130, Arg144, Gln224, Thr239, and Arg303 each bind IMP. The active-site Proton donor is the His43. 299 to 305 (TVTKRPR) serves as a coordination point for substrate. GTP contacts are provided by residues Arg305, 331–333 (LID), and 413–415 (SVG).

Belongs to the adenylosuccinate synthetase family. In terms of assembly, homodimer. The cofactor is Mg(2+).

The protein resides in the cytoplasm. The catalysed reaction is IMP + L-aspartate + GTP = N(6)-(1,2-dicarboxyethyl)-AMP + GDP + phosphate + 2 H(+). It participates in purine metabolism; AMP biosynthesis via de novo pathway; AMP from IMP: step 1/2. In terms of biological role, plays an important role in the de novo pathway of purine nucleotide biosynthesis. Catalyzes the first committed step in the biosynthesis of AMP from IMP. The polypeptide is Adenylosuccinate synthetase (Malacoplasma penetrans (strain HF-2) (Mycoplasma penetrans)).